The sequence spans 309 residues: Homoserine kinase (309 aa).

Position 91 to 101 (91 to 101 (PIGSGLGSSAC)) interacts with ATP.

This sequence belongs to the GHMP kinase family. Homoserine kinase subfamily.

The protein resides in the cytoplasm. The catalysed reaction is L-homoserine + ATP = O-phospho-L-homoserine + ADP + H(+). Its pathway is amino-acid biosynthesis; L-threonine biosynthesis; L-threonine from L-aspartate: step 4/5. Functionally, catalyzes the ATP-dependent phosphorylation of L-homoserine to L-homoserine phosphate. The sequence is that of Homoserine kinase from Yersinia enterocolitica serotype O:8 / biotype 1B (strain NCTC 13174 / 8081).